Consider the following 571-residue polypeptide: 2-succinyl-5-enolpyruvyl-6-hydroxy-3-cyclohexene-1-carboxylate synthase (571 aa).

The protein belongs to the TPP enzyme family. MenD subfamily. Homodimer. Requires Mg(2+) as cofactor. The cofactor is Mn(2+). Thiamine diphosphate is required as a cofactor.

The catalysed reaction is isochorismate + 2-oxoglutarate + H(+) = 5-enolpyruvoyl-6-hydroxy-2-succinyl-cyclohex-3-ene-1-carboxylate + CO2. Its pathway is quinol/quinone metabolism; 1,4-dihydroxy-2-naphthoate biosynthesis; 1,4-dihydroxy-2-naphthoate from chorismate: step 2/7. It functions in the pathway quinol/quinone metabolism; menaquinone biosynthesis. Catalyzes the thiamine diphosphate-dependent decarboxylation of 2-oxoglutarate and the subsequent addition of the resulting succinic semialdehyde-thiamine pyrophosphate anion to isochorismate to yield 2-succinyl-5-enolpyruvyl-6-hydroxy-3-cyclohexene-1-carboxylate (SEPHCHC). This Vibrio parahaemolyticus serotype O3:K6 (strain RIMD 2210633) protein is 2-succinyl-5-enolpyruvyl-6-hydroxy-3-cyclohexene-1-carboxylate synthase.